We begin with the raw amino-acid sequence, 403 residues long: tRNA(Met) cytidine acetate ligase (403 aa).

ATP contacts are provided by residues Ile-7–His-20, Gly-102, Asn-168, and Arg-193.

Belongs to the TmcAL family.

It localises to the cytoplasm. The enzyme catalyses cytidine(34) in elongator tRNA(Met) + acetate + ATP = N(4)-acetylcytidine(34) in elongator tRNA(Met) + AMP + diphosphate. Its function is as follows. Catalyzes the formation of N(4)-acetylcytidine (ac(4)C) at the wobble position of elongator tRNA(Met), using acetate and ATP as substrates. First activates an acetate ion to form acetyladenylate (Ac-AMP) and then transfers the acetyl group to tRNA to form ac(4)C34. The chain is tRNA(Met) cytidine acetate ligase from Clostridium tetani (strain Massachusetts / E88).